A 121-amino-acid chain; its full sequence is Putative iron-sulfur cluster insertion protein ErpA 1 (121 aa).

The iron-sulfur cluster site is built by Cys49, Cys113, and Cys115.

It belongs to the HesB/IscA family. Homodimer. Iron-sulfur cluster serves as cofactor.

In terms of biological role, required for insertion of 4Fe-4S clusters. The protein is Putative iron-sulfur cluster insertion protein ErpA 1 of Polaromonas naphthalenivorans (strain CJ2).